The following is a 167-amino-acid chain: Thioredoxin M-type, chloroplastic (167 aa).

The N-terminal 53 residues, 1–53 (MAMETCFRAWALHAPAGSKDRLLVGNLVLPSKRALAPLSVGRVATRRPRHVCQ), are a transit peptide targeting the chloroplast. Positions 54-165 (SKNAVDEVVV…LTTLIDKYIG (112 aa)) constitute a Thioredoxin domain. A disulfide bond links Cys89 and Cys92.

The protein belongs to the thioredoxin family. Plant M-type subfamily. In terms of assembly, forms a complex with heterodimeric ferredoxin-thioredoxin reductase (FTR) and ferredoxin.

Its subcellular location is the plastid. The protein resides in the chloroplast. In terms of biological role, participates in various redox reactions through the reversible oxidation of the active center dithiol to a disulfide. The M form is known to activate NADP-malate dehydrogenase. The protein is Thioredoxin M-type, chloroplastic (TRM1) of Zea mays (Maize).